The primary structure comprises 505 residues: Maturase K (505 aa).

It belongs to the intron maturase 2 family. MatK subfamily.

Its subcellular location is the plastid. It localises to the chloroplast. Usually encoded in the trnK tRNA gene intron. Probably assists in splicing its own and other chloroplast group II introns. This Sciadopitys verticillata (Japanese umbrella-pine) protein is Maturase K.